Reading from the N-terminus, the 212-residue chain is Imidazole glycerol phosphate synthase subunit HisH (212 aa).

The Glutamine amidotransferase type-1 domain maps to 3–212 (DIAIVDYGMG…LGNFVRWKPV (210 aa)). The active-site Nucleophile is the Cys82. Active-site residues include His191 and Glu193.

In terms of assembly, heterodimer of HisH and HisF.

It localises to the cytoplasm. It catalyses the reaction 5-[(5-phospho-1-deoxy-D-ribulos-1-ylimino)methylamino]-1-(5-phospho-beta-D-ribosyl)imidazole-4-carboxamide + L-glutamine = D-erythro-1-(imidazol-4-yl)glycerol 3-phosphate + 5-amino-1-(5-phospho-beta-D-ribosyl)imidazole-4-carboxamide + L-glutamate + H(+). The catalysed reaction is L-glutamine + H2O = L-glutamate + NH4(+). Its pathway is amino-acid biosynthesis; L-histidine biosynthesis; L-histidine from 5-phospho-alpha-D-ribose 1-diphosphate: step 5/9. Its function is as follows. IGPS catalyzes the conversion of PRFAR and glutamine to IGP, AICAR and glutamate. The HisH subunit catalyzes the hydrolysis of glutamine to glutamate and ammonia as part of the synthesis of IGP and AICAR. The resulting ammonia molecule is channeled to the active site of HisF. The polypeptide is Imidazole glycerol phosphate synthase subunit HisH (Nitrosospira multiformis (strain ATCC 25196 / NCIMB 11849 / C 71)).